Reading from the N-terminus, the 160-residue chain is Transcription elongation factor GreB (160 aa).

The protein belongs to the GreA/GreB family. GreB subfamily.

Necessary for efficient RNA polymerase transcription elongation past template-encoded arresting sites. The arresting sites in DNA have the property of trapping a certain fraction of elongating RNA polymerases that pass through, resulting in locked ternary complexes. Cleavage of the nascent transcript by cleavage factors such as GreA or GreB allows the resumption of elongation from the new 3'terminus. GreB releases sequences of up to 9 nucleotides in length. This is Transcription elongation factor GreB from Vibrio vulnificus (strain CMCP6).